Here is a 208-residue protein sequence, read N- to C-terminus: FMN-dependent NADH:quinone oxidoreductase (208 aa).

FMN contacts are provided by residues 17 to 19 (SNS), 99 to 102 (MWNL), and 143 to 146 (SRGG).

Belongs to the azoreductase type 1 family. Homodimer. The cofactor is FMN.

It catalyses the reaction 2 a quinone + NADH + H(+) = 2 a 1,4-benzosemiquinone + NAD(+). The enzyme catalyses N,N-dimethyl-1,4-phenylenediamine + anthranilate + 2 NAD(+) = 2-(4-dimethylaminophenyl)diazenylbenzoate + 2 NADH + 2 H(+). Its function is as follows. Quinone reductase that provides resistance to thiol-specific stress caused by electrophilic quinones. In terms of biological role, also exhibits azoreductase activity. Catalyzes the reductive cleavage of the azo bond in aromatic azo compounds to the corresponding amines. This is FMN-dependent NADH:quinone oxidoreductase from Staphylococcus aureus (strain COL).